A 203-amino-acid polypeptide reads, in one-letter code: Pyridoxine/pyridoxamine 5'-phosphate oxidase (203 aa).

FMN contacts are provided by residues 50–55 (RMVLLK), 65–66 (YT), K72, and Q94. K55 contributes to the substrate binding site. Positions 112, 116, and 120 each coordinate substrate. FMN is bound by residues 129–130 (QS) and W174. 180 to 182 (RLH) lines the substrate pocket. R184 contributes to the FMN binding site.

Belongs to the pyridoxamine 5'-phosphate oxidase family. In terms of assembly, homodimer. FMN is required as a cofactor.

It catalyses the reaction pyridoxamine 5'-phosphate + O2 + H2O = pyridoxal 5'-phosphate + H2O2 + NH4(+). The enzyme catalyses pyridoxine 5'-phosphate + O2 = pyridoxal 5'-phosphate + H2O2. It functions in the pathway cofactor metabolism; pyridoxal 5'-phosphate salvage; pyridoxal 5'-phosphate from pyridoxamine 5'-phosphate: step 1/1. The protein operates within cofactor metabolism; pyridoxal 5'-phosphate salvage; pyridoxal 5'-phosphate from pyridoxine 5'-phosphate: step 1/1. Its function is as follows. Catalyzes the oxidation of either pyridoxine 5'-phosphate (PNP) or pyridoxamine 5'-phosphate (PMP) into pyridoxal 5'-phosphate (PLP). This is Pyridoxine/pyridoxamine 5'-phosphate oxidase from Brucella anthropi (strain ATCC 49188 / DSM 6882 / CCUG 24695 / JCM 21032 / LMG 3331 / NBRC 15819 / NCTC 12168 / Alc 37) (Ochrobactrum anthropi).